Consider the following 263-residue polypeptide: Acyl-[acyl-carrier-protein]--UDP-N-acetylglucosamine O-acyltransferase (263 aa).

It belongs to the transferase hexapeptide repeat family. LpxA subfamily. As to quaternary structure, homotrimer.

The protein resides in the cytoplasm. It catalyses the reaction a (3R)-hydroxyacyl-[ACP] + UDP-N-acetyl-alpha-D-glucosamine = a UDP-3-O-[(3R)-3-hydroxyacyl]-N-acetyl-alpha-D-glucosamine + holo-[ACP]. It functions in the pathway glycolipid biosynthesis; lipid IV(A) biosynthesis; lipid IV(A) from (3R)-3-hydroxytetradecanoyl-[acyl-carrier-protein] and UDP-N-acetyl-alpha-D-glucosamine: step 1/6. Functionally, involved in the biosynthesis of lipid A, a phosphorylated glycolipid that anchors the lipopolysaccharide to the outer membrane of the cell. This is Acyl-[acyl-carrier-protein]--UDP-N-acetylglucosamine O-acyltransferase from Xanthomonas euvesicatoria pv. vesicatoria (strain 85-10) (Xanthomonas campestris pv. vesicatoria).